The sequence spans 119 residues: MSLTSRASARKRRHVRLRKKISGTCDRPRLSVTRSNRHVFVQAVDDISGKTLVSASTMEKDIRALELGKTERALAVGKLVAQRALAVGVKSAVFDRGGCKYTGRVAAVAEGAREAGLQT.

Belongs to the universal ribosomal protein uL18 family. In terms of assembly, part of the 50S ribosomal subunit; part of the 5S rRNA/L5/L18/L25 subcomplex. Contacts the 5S and 23S rRNAs.

Its function is as follows. This is one of the proteins that bind and probably mediate the attachment of the 5S RNA into the large ribosomal subunit, where it forms part of the central protuberance. In Tropheryma whipplei (strain TW08/27) (Whipple's bacillus), this protein is Large ribosomal subunit protein uL18.